Here is a 298-residue protein sequence, read N- to C-terminus: UDP-N-acetylenolpyruvoylglucosamine reductase (298 aa).

In terms of domain architecture, FAD-binding PCMH-type spans Thr27–Glu191. The active site involves Arg170. Ser220 (proton donor) is an active-site residue. Glu290 is a catalytic residue.

Belongs to the MurB family. The cofactor is FAD.

It localises to the cytoplasm. The enzyme catalyses UDP-N-acetyl-alpha-D-muramate + NADP(+) = UDP-N-acetyl-3-O-(1-carboxyvinyl)-alpha-D-glucosamine + NADPH + H(+). Its pathway is cell wall biogenesis; peptidoglycan biosynthesis. In terms of biological role, cell wall formation. In Listeria innocua serovar 6a (strain ATCC BAA-680 / CLIP 11262), this protein is UDP-N-acetylenolpyruvoylglucosamine reductase.